Here is a 412-residue protein sequence, read N- to C-terminus: Peptidase T (412 aa).

Position 78 (histidine 78) interacts with Zn(2+). Residue aspartate 80 is part of the active site. Aspartate 140 is a binding site for Zn(2+). Glutamate 173 serves as the catalytic Proton acceptor. Glutamate 174, aspartate 196, and histidine 379 together coordinate Zn(2+).

This sequence belongs to the peptidase M20B family. Zn(2+) is required as a cofactor.

Its subcellular location is the cytoplasm. It carries out the reaction Release of the N-terminal residue from a tripeptide.. In terms of biological role, cleaves the N-terminal amino acid of tripeptides. The polypeptide is Peptidase T (Edwardsiella ictaluri (strain 93-146)).